The primary structure comprises 333 residues: tRNA(Ile)-lysidine synthase (333 aa).

25–30 (SGGPDS) lines the ATP pocket.

This sequence belongs to the tRNA(Ile)-lysidine synthase family.

Its subcellular location is the cytoplasm. It catalyses the reaction cytidine(34) in tRNA(Ile2) + L-lysine + ATP = lysidine(34) in tRNA(Ile2) + AMP + diphosphate + H(+). Ligates lysine onto the cytidine present at position 34 of the AUA codon-specific tRNA(Ile) that contains the anticodon CAU, in an ATP-dependent manner. Cytidine is converted to lysidine, thus changing the amino acid specificity of the tRNA from methionine to isoleucine. The protein is tRNA(Ile)-lysidine synthase of Ureaplasma parvum serovar 3 (strain ATCC 700970).